The sequence spans 196 residues: MGLELPLILGTSSVFRREQMERLGIAFQAASPDFDETPMLGESAPQTALRLAEGKARSLAGRFPEALIVGADQVAWCDGRQWGKPMNLANAQKMLMHLSGREIEFYSAVVLLNTVTGRMQRHIDKTVVVMRKLDELHILRYLEREPDAVYCSCALKSEALGALLIERIESTDPNALIGLPVFRLVDFLKNEGVDVL.

The active-site Proton acceptor is D72.

The protein belongs to the Maf family. YceF subfamily. It depends on a divalent metal cation as a cofactor.

It localises to the cytoplasm. It carries out the reaction N(7)-methyl-GTP + H2O = N(7)-methyl-GMP + diphosphate + H(+). Nucleoside triphosphate pyrophosphatase that hydrolyzes 7-methyl-GTP (m(7)GTP). May have a dual role in cell division arrest and in preventing the incorporation of modified nucleotides into cellular nucleic acids. The polypeptide is 7-methyl-GTP pyrophosphatase (Neisseria meningitidis serogroup A / serotype 4A (strain DSM 15465 / Z2491)).